The chain runs to 250 residues: Small ribosomal subunit protein uS2 (250 aa).

The protein belongs to the universal ribosomal protein uS2 family.

In Paraburkholderia phytofirmans (strain DSM 17436 / LMG 22146 / PsJN) (Burkholderia phytofirmans), this protein is Small ribosomal subunit protein uS2.